Reading from the N-terminus, the 263-residue chain is Small ribosomal subunit protein uS2 (263 aa).

Basic and acidic residues predominate over residues 230–249 (GEALVNEEKEITDEEKKEVL). The segment at 230-263 (GEALVNEEKEITDEEKKEVLDEAMSEEDFGEEQE) is disordered. Acidic residues predominate over residues 250–263 (DEAMSEEDFGEEQE).

The protein belongs to the universal ribosomal protein uS2 family.

The chain is Small ribosomal subunit protein uS2 from Campylobacter jejuni subsp. jejuni serotype O:2 (strain ATCC 700819 / NCTC 11168).